Reading from the N-terminus, the 355-residue chain is Phosphatidylinositol:ceramide inositolphosphotransferase (355 aa).

Residues 1–44 (MISYPFFSLSPPGLVPPPMAVPPVEMYSGSFWNRMRKPLPLRTQ) lie on the Cytoplasmic side of the membrane. A helical membrane pass occupies residues 45-65 (VIRFTVVFVIVSFILAVALQI). At 66–89 (THERMPDPKVTKPLPDLGFELLTK) the chain is on the extracellular side. The helical transmembrane segment at 90 to 110 (ISFLSVVTDVLIAFLSSLSFF) threads the bilayer. Residues 111–165 (TLWKLYLLHRHCVGSGEPELPCNIPGVSRFFLSVWLCKENCRIELRNVHTIAWIR) are Cytoplasmic-facing. The chain crosses the membrane as a helical span at residues 166–186 (FITSYALLLLFRSLVIVMTSM). Over 187–205 (PTPVDKCQNPPKIENPVKN) the chain is Extracellular. Residues 206 to 226 (VILTVLTAGGGSIHCGDLMYS) traverse the membrane as a helical segment. At 227–251 (GHTVILTLHLMFHWIYGAMVHWSFR) the chain is on the cytoplasmic side. Catalysis depends on residues histidine 228, histidine 271, and aspartate 275. A helical transmembrane segment spans residues 252 to 272 (PVVTVVAIFGYYCIVASRSHY). The Extracellular segment spans residues 273 to 275 (TDD). The chain crosses the membrane as a helical span at residues 276–296 (VLVAIYLTIATFIAVGHNADG). At 297–355 (APWQLQLFIRWLPCCGANSREVTEDSQPVMVAFKSEAVDELRERDDSAGLSCEVSTNEV) the chain is on the cytoplasmic side.

This sequence belongs to the sphingomyelin synthase family.

Its subcellular location is the membrane. Its function is as follows. Bidirectional lipid inositolphosphotransferase capable of converting phosphatidylinositol (PI) and ceramide to inositol-phosphorylceramide (IPC) and diacylglycerol (DAG) and vice versa. Direction is dependent on the relative concentrations of DAG and ceramide as phosphoinositol acceptors. Does not function strictly as a SM synthase. Essential for viability of the pathogenic bloodstream stage of this human protozoan parasite and, consequently, can be considered as potential drug target. In Trypanosoma brucei brucei (strain 927/4 GUTat10.1), this protein is Phosphatidylinositol:ceramide inositolphosphotransferase.